The chain runs to 652 residues: Complement component C1q receptor (652 aa).

A signal peptide spans 1 to 21; the sequence is MATSMGLLLLLLLLLTQPGAG. Topologically, residues 24–580 are extracellular; it reads ADTEAVVCVG…QNNDGTDGQK (557 aa). Residues 32 to 174 form the C-type lectin domain; it reads VGTACYTAHS…CGSPGSPGSN (143 aa). Intrachain disulfides connect Cys141-Cys165, Cys264-Cys275, Cys271-Cys285, Cys287-Cys300, Cys306-Cys317, Cys311-Cys328, Cys330-Cys343, Cys349-Cys358, Cys354-Cys367, Cys369-Cys383, Cys389-Cys400, Cys396-Cys409, Cys411-Cys425, Cys431-Cys443, Cys439-Cys452, and Cys454-Cys467. 2 consecutive EGF-like domains span residues 260 to 301 and 302 to 344; these read PKYG…VTCA and SRNP…LDCV. Asn325 carries an N-linked (GlcNAc...) asparagine glycan. One can recognise an EGF-like 3; calcium-binding domain in the interval 345 to 384; that stretch reads DVDECQDSPCAQECVNTPGGFRCECWVGYEPGGPGEGACQ. Positions 385 to 426 constitute an EGF-like 4; calcium-binding domain; it reads DVDECALGRSPCAQGCTNTDGSFHCSCEEGYVLAGEDGTQCQ. One can recognise an EGF-like 5; calcium-binding domain in the interval 427–468; it reads DVDECVGPGGPLCDSLCFNTQGSFHCGCLPGWVLAPNGVSCT. Disordered stretches follow at residues 472–546 and 553–572; these read VSLG…VWRE and TAASGPQEPAGGDSSVATQN. The segment covering 512–526 has biased composition (polar residues); sequence ATPTTSRPSLSSDAP. The helical transmembrane segment at 581–601 threads the bilayer; sequence LLLFYILGTVVAILLLLALAL. The Cytoplasmic portion of the chain corresponds to 602–652; that stretch reads GLLVYRKRRAKREEKKEKKPQNAADSYSWVPERAESRAMENQYSPTPGTDC. A disordered region spans residues 611–652; sequence AKREEKKEKKPQNAADSYSWVPERAESRAMENQYSPTPGTDC. Positions 612-621 are enriched in basic and acidic residues; that stretch reads KREEKKEKKP. Ser627 carries the post-translational modification Phosphoserine. A phosphotyrosine mark is found at Tyr628 and Tyr644. The segment covering 640 to 652 has biased composition (polar residues); that stretch reads MENQYSPTPGTDC.

As to quaternary structure, homodimer. Interacts with C1QBP; the association may represent a cell surface C1q receptor. Interacts with surfactant protein A/SFTPA1. Interacts with multimerin-2/MMRN2. Interacts with DAG1; this interaction plays an important role in endothelial cell migration. Interacts with CBL. Interacts with IGFBP7. Interacts with VEGFR2. (Microbial infection) Interacts with hepatitis virus C/HCV core protein. N- and O-glycosylated. Post-translationally, phosphorylated on Tyr-628 and Tyr-644 by SRC; these phosphorylations promote endothelial cell adhesion and migration. In terms of tissue distribution, highly expressed in endothelial cells, platelets, cells of myeloid origin, such as monocytes and neutrophils. Not expressed in cells of lymphoid origin.

The protein resides in the cell membrane. Functionally, cell surface receptor that plays a role in various physiological processes including inflammation, phagocytosis, and cell adhesion. Plays a role in phagocytosis and enhances the uptake of apoptotic cells and immune complexes by acting as a receptor for defense collagens including surfactant protein A/SFTPA1, C1q, and mannose-binding lectin (MBL2). Plays a role in the regulation of endothelial cell function and adhesion by activating angiogenesis. Mechanistically, exerts its angiogenic function by associating with beta-dystroglycan, leading to SRC-dependent phosphorylation and subsequent recruitment of CBL. In turn, CBL provides a docking site for downstream signaling components, such as CRKL to enhance cell migration. Participates in angiogenesis also by acting as a receptor for the ECM pan-endothelial glycoprotein multimerin-2/MMRN2 and IGFBP7 ligands. Both ligands play a non-redundant role in CD93-mediated endothelial cell function. Acts as a key regulator of endothelial barrier function through modulating VEGFR2 function. The protein is Complement component C1q receptor (CD93) of Homo sapiens (Human).